The sequence spans 179 residues: Repressor of phase 1 flagellin gene (179 aa).

In terms of biological role, transcriptional repressor of the FliC phase-1 flagellin. The sequence is that of Repressor of phase 1 flagellin gene (fljA) from Salmonella typhimurium (strain LT2 / SGSC1412 / ATCC 700720).